The chain runs to 223 residues: Transcription factor bHLH75 (223 aa).

The tract at residues 58 to 100 (FPNLLHGNTRRKGNKEESGSKRRRKRSEEEEAMNGDETQKPKD) is disordered. The 51-residue stretch at 110 to 160 (QATDSHSLAERVRREKINERLKCLQDLVPGCYKAMGMAVMLDVIIDYVRSL) folds into the bHLH domain.

As to quaternary structure, homodimer. In terms of tissue distribution, expressed in leaves, stems, and flowers.

The protein localises to the nucleus. The chain is Transcription factor bHLH75 (BHLH75) from Arabidopsis thaliana (Mouse-ear cress).